The following is a 402-amino-acid chain: Flavohemoprotein (402 aa).

In terms of domain architecture, Globin spans 1–138; that stretch reads MLSPEVRALV…LADLLIGRER (138 aa). H85 contributes to the heme b binding site. Catalysis depends on charge relay system residues Y95 and E137. The segment at 149–402 is reductase; it reads GGWTGWRAFK…AEVFGTGGVA (254 aa). In terms of domain architecture, FAD-binding FR-type spans 152–261; that stretch reads TGWRAFKVVR…SPPQGDFTLD (110 aa). FAD-binding positions include Y190 and 206-209; that span reads RQYS. NADP(+) is bound at residue 274 to 279; the sequence is GVGLTP. Residue 395–398 coordinates FAD; the sequence is VFGT.

It belongs to the globin family. Two-domain flavohemoproteins subfamily. In the C-terminal section; belongs to the flavoprotein pyridine nucleotide cytochrome reductase family. Heme b is required as a cofactor. FAD serves as cofactor.

The enzyme catalyses 2 nitric oxide + NADPH + 2 O2 = 2 nitrate + NADP(+) + H(+). It carries out the reaction 2 nitric oxide + NADH + 2 O2 = 2 nitrate + NAD(+) + H(+). Its function is as follows. Is involved in NO detoxification in an aerobic process, termed nitric oxide dioxygenase (NOD) reaction that utilizes O(2) and NAD(P)H to convert NO to nitrate, which protects the bacterium from various noxious nitrogen compounds. Therefore, plays a central role in the inducible response to nitrosative stress. The protein is Flavohemoprotein of Bordetella pertussis (strain Tohama I / ATCC BAA-589 / NCTC 13251).